A 268-amino-acid chain; its full sequence is Cytochrome c oxidase subunit 3 (268 aa).

A run of 7 helical transmembrane segments spans residues 19 to 39, 49 to 69, 85 to 105, 124 to 144, 165 to 185, 202 to 222, and 245 to 265; these read PWPI…VLTM, FDLG…DIVI, LIIG…SVFW, PVGI…IILL, SIIG…FQAF, VFFA…LFLF, and ILYW…VYFW.

It belongs to the cytochrome c oxidase subunit 3 family. In terms of assembly, component of the cytochrome c oxidase (complex IV, CIV), a multisubunit enzyme composed of a catalytic core of 3 subunits and several supernumerary subunits. The complex exists as a monomer or a dimer and forms supercomplexes (SCs) in the inner mitochondrial membrane with ubiquinol-cytochrome c oxidoreductase (cytochrome b-c1 complex, complex III, CIII).

The protein localises to the mitochondrion inner membrane. It carries out the reaction 4 Fe(II)-[cytochrome c] + O2 + 8 H(+)(in) = 4 Fe(III)-[cytochrome c] + 2 H2O + 4 H(+)(out). Functionally, component of the cytochrome c oxidase, the last enzyme in the mitochondrial electron transport chain which drives oxidative phosphorylation. The respiratory chain contains 3 multisubunit complexes succinate dehydrogenase (complex II, CII), ubiquinol-cytochrome c oxidoreductase (cytochrome b-c1 complex, complex III, CIII) and cytochrome c oxidase (complex IV, CIV), that cooperate to transfer electrons derived from NADH and succinate to molecular oxygen, creating an electrochemical gradient over the inner membrane that drives transmembrane transport and the ATP synthase. Cytochrome c oxidase is the component of the respiratory chain that catalyzes the reduction of oxygen to water. Electrons originating from reduced cytochrome c in the intermembrane space (IMS) are transferred via the dinuclear copper A center (CU(A)) of subunit 2 and heme A of subunit 1 to the active site in subunit 1, a binuclear center (BNC) formed by heme A3 and copper B (CU(B)). The BNC reduces molecular oxygen to 2 water molecules using 4 electrons from cytochrome c in the IMS and 4 protons from the mitochondrial matrix. The sequence is that of Cytochrome c oxidase subunit 3 (COIII) from Schizophyllum commune (Split gill fungus).